The sequence spans 94 residues: Viral macrophage inflammatory protein 2 (94 aa).

A signal peptide spans 1 to 20; it reads MDTKGILLVAVLTALLCLQS. 2 disulfides stabilise this stretch: Cys-34–Cys-58 and Cys-35–Cys-74.

This sequence belongs to the intercrine beta (chemokine CC) family. Monomer. Interacts with human chemokine receptor CXCR4.

Its subcellular location is the secreted. Functionally, blocks infection by several different human immunodeficiency virus type 1 (HIV-1) strains. This occurs because vMIP-II binds to a wide range of chemokine receptors. May form part of the response to host defenses contributing to virus-induced neoplasia and may have relevance to KSHV and HIV-I interactions. The sequence is that of Viral macrophage inflammatory protein 2 (ORF K4) from Human herpesvirus 8 type P (isolate GK18) (HHV-8).